Here is a 568-residue protein sequence, read N- to C-terminus: Acetate--CoA ligase CCL3 (568 aa).

Residues 204–212 (TSGTTASPK), 340–345 (HTYGLS), D437, 449–452 (IKDR), and K547 contribute to the ATP site. An SBD1 region spans residues 272-340 (TAKGVYSAIA…MSEKGFKVAH (69 aa)). The tract at residues 341 to 417 (TYGLSETYGP…MRGNAVMKGY (77 aa)) is SBD2.

The protein belongs to the ATP-dependent AMP-binding enzyme family. Mostly expressed in glandular trichomes (lupulin glands) after flowering and in old leaves, and, to a lower extent, in stems, young leaves, cones and flowers.

It is found in the cytoplasm. The protein localises to the cytosol. It carries out the reaction acetate + ATP + CoA = acetyl-CoA + AMP + diphosphate. It catalyses the reaction propanoate + ATP + CoA = propanoyl-CoA + AMP + diphosphate. The catalysed reaction is butanoate + ATP + CoA = butanoyl-CoA + AMP + diphosphate. The enzyme catalyses 3-methylbutanoate + ATP + CoA = 3-methylbutanoyl-CoA + AMP + diphosphate. It carries out the reaction pentanoate + ATP + CoA = pentanoyl-CoA + AMP + diphosphate. It catalyses the reaction hexanoate + ATP + CoA = hexanoyl-CoA + AMP + diphosphate. The catalysed reaction is 2-methylpropanoate + ATP + CoA = 2-methylpropanoyl-CoA + AMP + diphosphate. The enzyme catalyses 2-methylbutanoate + ATP + CoA = 2-methylbutanoyl-CoA + AMP + diphosphate. It carries out the reaction 2-methylpentanoate + ATP + CoA = 2-methylpentanoyl-CoA + AMP + diphosphate. It catalyses the reaction 3-methylpentanoate + ATP + CoA = 3-methylpentanoyl-CoA + AMP + diphosphate. The catalysed reaction is 4-methylpentanoate + ATP + CoA = 4-methylpentanoyl-CoA + AMP + diphosphate. It functions in the pathway secondary metabolite biosynthesis. Involved in the biosynthesis of prenylated phenolics natural products which contribute to the bitter taste of beer and display broad biological activities. Catalyzes the ligation of CoA on propanoate to produce propanoyl-CoA. Can also use 2-methylpropanoate (isobutyric acid), acetate, butanoate, isovalerate, pentanoate, hexanoate, 2-methylbutanoate, 2-methylpentanoate, 3-methylpentanoate and 4-methylpentanoate as substrates with a lower efficiency. Triggers the formation of very short chain acyl-CoAs from the corresponding fatty acids, including acetic acid, propanoic acid, butyric acid and its isomer. The chain is Acetate--CoA ligase CCL3 from Humulus lupulus (European hop).